A 153-amino-acid polypeptide reads, in one-letter code: MHRIAIYSIGKKDEKCYEAIYEDLIKNSKKFALIETKNVFNKKINAAQSDAQKAMKAYSDTFKPFILSDGFNIALDPEGKCLDSFAFANLLKEHTKLAFFIGGAYGLERSFVQSCDMALSLSPLTMSHKIAKMVLLEQLFRGLSIIHNHPYHK.

S-adenosyl-L-methionine is bound by residues Leu75, Gly102, and 121–126; that span reads LSPLTM.

This sequence belongs to the RNA methyltransferase RlmH family. As to quaternary structure, homodimer.

The protein localises to the cytoplasm. It carries out the reaction pseudouridine(1915) in 23S rRNA + S-adenosyl-L-methionine = N(3)-methylpseudouridine(1915) in 23S rRNA + S-adenosyl-L-homocysteine + H(+). Specifically methylates the pseudouridine at position 1915 (m3Psi1915) in 23S rRNA. The protein is Ribosomal RNA large subunit methyltransferase H of Nitratiruptor sp. (strain SB155-2).